The following is a 370-amino-acid chain: Arginine kinase (370 aa).

In terms of domain architecture, Phosphagen kinase N-terminal spans 6–89 (QKKYPAKDDF…FDPVIEEYHN (84 aa)). In terms of domain architecture, Phosphagen kinase C-terminal spans 115–358 (YVISSRVRTG…KVLIEMEKKL (244 aa)). ATP contacts are provided by residues 118-122 (SSRVR) and H181. Position 222 (E222) interacts with substrate. R226 contributes to the ATP binding site. C274 lines the substrate pocket. ATP is bound by residues 283 to 287 (RCSVH) and 311 to 316 (RGTSGE). E316 contributes to the substrate binding site.

The protein belongs to the ATP:guanido phosphotransferase family. As to quaternary structure, homodimer. Post-translationally, the N-terminus is blocked.

The enzyme catalyses L-arginine + ATP = N(omega)-phospho-L-arginine + ADP + H(+). The polypeptide is Arginine kinase (AK) (Stichopus japonicus (Sea cucumber)).